Here is a 512-residue protein sequence, read N- to C-terminus: ATP synthase subunit alpha (512 aa).

169-176 (GDRQTGKT) serves as a coordination point for ATP.

It belongs to the ATPase alpha/beta chains family. F-type ATPases have 2 components, CF(1) - the catalytic core - and CF(0) - the membrane proton channel. CF(1) has five subunits: alpha(3), beta(3), gamma(1), delta(1), epsilon(1). CF(0) has three main subunits: a(1), b(2) and c(9-12). The alpha and beta chains form an alternating ring which encloses part of the gamma chain. CF(1) is attached to CF(0) by a central stalk formed by the gamma and epsilon chains, while a peripheral stalk is formed by the delta and b chains.

The protein localises to the cell membrane. It carries out the reaction ATP + H2O + 4 H(+)(in) = ADP + phosphate + 5 H(+)(out). Produces ATP from ADP in the presence of a proton gradient across the membrane. The alpha chain is a regulatory subunit. This is ATP synthase subunit alpha from Elusimicrobium minutum (strain Pei191).